Here is a 436-residue protein sequence, read N- to C-terminus: Ribulose bisphosphate carboxylase large chain (436 aa).

At Lys4 the chain carries N6,N6,N6-trimethyllysine. Residues Asn113 and Thr163 each coordinate substrate. The active-site Proton acceptor is the Lys165. Position 167 (Lys167) interacts with substrate. Residues Lys191, Asp193, and Glu194 each contribute to the Mg(2+) site. Lys191 bears the N6-carboxylysine mark. Catalysis depends on His284, which acts as the Proton acceptor. Positions 285, 317, and 369 each coordinate substrate.

This sequence belongs to the RuBisCO large chain family. Type I subfamily. Heterohexadecamer of 8 large chains and 8 small chains; disulfide-linked. The disulfide link is formed within the large subunit homodimers. It depends on Mg(2+) as a cofactor. Post-translationally, the disulfide bond which can form in the large chain dimeric partners within the hexadecamer appears to be associated with oxidative stress and protein turnover.

The protein resides in the plastid. Its subcellular location is the chloroplast. The catalysed reaction is 2 (2R)-3-phosphoglycerate + 2 H(+) = D-ribulose 1,5-bisphosphate + CO2 + H2O. The enzyme catalyses D-ribulose 1,5-bisphosphate + O2 = 2-phosphoglycolate + (2R)-3-phosphoglycerate + 2 H(+). Functionally, ruBisCO catalyzes two reactions: the carboxylation of D-ribulose 1,5-bisphosphate, the primary event in carbon dioxide fixation, as well as the oxidative fragmentation of the pentose substrate in the photorespiration process. Both reactions occur simultaneously and in competition at the same active site. This chain is Ribulose bisphosphate carboxylase large chain, found in Sanguinaria canadensis (Bloodroot).